Reading from the N-terminus, the 343-residue chain is Fructose-1,6-bisphosphatase, cytosolic (343 aa).

Residues E71, E100, D121, L123, and D124 each coordinate Mg(2+). Residues 124–127, N215, Y247, Y267, and K277 contribute to the substrate site; that span reads DGSS. E283 is a Mg(2+) binding site.

It belongs to the FBPase class 1 family. Mg(2+) is required as a cofactor.

Its subcellular location is the cytoplasm. The catalysed reaction is beta-D-fructose 1,6-bisphosphate + H2O = beta-D-fructose 6-phosphate + phosphate. The sequence is that of Fructose-1,6-bisphosphatase, cytosolic (CFBP) from Saccharum hybrid (Sugarcane).